We begin with the raw amino-acid sequence, 250 residues long: 2,3-bisphosphoglycerate-dependent phosphoglycerate mutase (250 aa).

Substrate contacts are provided by residues 10 to 17, 23 to 24, arginine 62, 89 to 92, lysine 100, 116 to 117, and 185 to 186; these read RHGESQWN, TG, ERHY, RR, and GN. Catalysis depends on histidine 11, which acts as the Tele-phosphohistidine intermediate. Residue glutamate 89 is the Proton donor/acceptor of the active site.

It belongs to the phosphoglycerate mutase family. BPG-dependent PGAM subfamily. As to quaternary structure, homodimer.

The enzyme catalyses (2R)-2-phosphoglycerate = (2R)-3-phosphoglycerate. It functions in the pathway carbohydrate degradation; glycolysis; pyruvate from D-glyceraldehyde 3-phosphate: step 3/5. Functionally, catalyzes the interconversion of 2-phosphoglycerate and 3-phosphoglycerate. The chain is 2,3-bisphosphoglycerate-dependent phosphoglycerate mutase from Cronobacter sakazakii (strain ATCC BAA-894) (Enterobacter sakazakii).